Here is a 238-residue protein sequence, read N- to C-terminus: 2-C-methyl-D-erythritol 4-phosphate cytidylyltransferase (238 aa).

The protein belongs to the IspD/TarI cytidylyltransferase family. IspD subfamily.

The enzyme catalyses 2-C-methyl-D-erythritol 4-phosphate + CTP + H(+) = 4-CDP-2-C-methyl-D-erythritol + diphosphate. It participates in isoprenoid biosynthesis; isopentenyl diphosphate biosynthesis via DXP pathway; isopentenyl diphosphate from 1-deoxy-D-xylulose 5-phosphate: step 2/6. Catalyzes the formation of 4-diphosphocytidyl-2-C-methyl-D-erythritol from CTP and 2-C-methyl-D-erythritol 4-phosphate (MEP). The chain is 2-C-methyl-D-erythritol 4-phosphate cytidylyltransferase from Acinetobacter baumannii (strain AYE).